The primary structure comprises 887 residues: Kinesin-like protein KIF20A (887 aa).

An N-acetylserine modification is found at Ser-2. A phosphoserine mark is found at Ser-7, Ser-14, and Ser-21. The Kinesin motor domain occupies 63-506 (KVKVYLRIRP…AKFSALASQL (444 aa)). 159-166 (GVTNSGKT) contacts ATP. A Phosphoserine; by PLK1 modification is found at Ser-527. The tract at residues 527-553 (SPQVGPGLEKEDKADSDLEDSPEDEAD) is disordered. The span at 543–553 (DLEDSPEDEAD) shows a compositional bias: acidic residues. A coiled-coil region spans residues 559-804 (KEELLQVVEA…VLVKLDLQKK (246 aa)). Phosphoserine is present on residues Ser-683 and Ser-823. The interval 805 to 887 (AACIAEQYHT…LLKSPFGKKY (83 aa)) is globular. The tract at residues 826 to 875 (KRLGANQENQQPNHQPPGKKPFLRNLLPRTPTCQSSTDSSPYARILRSRH) is disordered. Residue Thr-855 is modified to Phosphothreonine. Over residues 856 to 865 (PTCQSSTDSS) the composition is skewed to polar residues. 3 positions are modified to phosphoserine: Ser-865, Ser-876, and Ser-881.

This sequence belongs to the TRAFAC class myosin-kinesin ATPase superfamily. Kinesin family. Post-translationally, phosphorylated by PLK1 at Ser-527 during mitosis, creating a docking site for PLK1 and recruiting PLK1 at central spindle. Ubiquitously expressed, with highest levels in spleen and testis.

The protein resides in the golgi apparatus. It localises to the cytoplasm. Its subcellular location is the cytoskeleton. The protein localises to the spindle. Functionally, mitotic kinesin required for chromosome passenger complex (CPC)-mediated cytokinesis. Following phosphorylation by PLK1, involved in recruitment of PLK1 to the central spindle. Interacts with guanosine triphosphate (GTP)-bound forms of RAB6A and RAB6B. May act as a motor required for the retrograde RAB6 regulated transport of Golgi membranes and associated vesicles along microtubules. Has a microtubule plus end-directed motility. The polypeptide is Kinesin-like protein KIF20A (Kif20a) (Mus musculus (Mouse)).